The following is a 104-amino-acid chain: Protein S100-A14 (104 aa).

Positions lysine 27–asparagine 61 constitute an EF-hand domain.

The protein belongs to the S-100 family. In terms of assembly, homodimer. Interacts with AGER. As to expression, expressed at highest levels in colon and at moderate levels in thymus, kidney, liver, small intestine, and lung. Low expression in heart and no expression is seen in brain, skeletal muscle, spleen, placenta and peripheral blood leukocytes.

The protein resides in the cytoplasm. Modulates P53/TP53 protein levels, and thereby plays a role in the regulation of cell survival and apoptosis. Depending on the context, it can promote cell proliferation or apoptosis. Plays a role in the regulation of cell migration by modulating the levels of MMP2, a matrix protease that is under transcriptional control of P53/TP53. Does not bind calcium. This chain is Protein S100-A14 (S100A14), found in Homo sapiens (Human).